We begin with the raw amino-acid sequence, 350 residues long: tRNA N6-adenosine threonylcarbamoyltransferase (350 aa).

Positions 117 and 121 each coordinate Fe cation. Substrate is bound by residues 140–144 (LVSGG), D173, G186, and N277. D305 contributes to the Fe cation binding site.

Belongs to the KAE1 / TsaD family. It depends on Fe(2+) as a cofactor.

It localises to the cytoplasm. It carries out the reaction L-threonylcarbamoyladenylate + adenosine(37) in tRNA = N(6)-L-threonylcarbamoyladenosine(37) in tRNA + AMP + H(+). Functionally, required for the formation of a threonylcarbamoyl group on adenosine at position 37 (t(6)A37) in tRNAs that read codons beginning with adenine. Is involved in the transfer of the threonylcarbamoyl moiety of threonylcarbamoyl-AMP (TC-AMP) to the N6 group of A37, together with TsaE and TsaB. TsaD likely plays a direct catalytic role in this reaction. In Novosphingobium aromaticivorans (strain ATCC 700278 / DSM 12444 / CCUG 56034 / CIP 105152 / NBRC 16084 / F199), this protein is tRNA N6-adenosine threonylcarbamoyltransferase.